Reading from the N-terminus, the 177-residue chain is Large ribosomal subunit protein bL31m (177 aa).

A mitochondrion-targeting transit peptide spans 1-14 (MLKSIFAKRFASTG). Residues 36–118 (KSRPAIYHQF…FSVDSTTPNS (83 aa)) are sufficient for general mitochondrial translation. The tract at residues 87–177 (LVVVDANSGG…KLASKKRDKK (91 aa)) is sufficient for dosage suppression of COX2 mutation. Over residues 111–123 (VDSTTPNSSSETV) the composition is skewed to polar residues. The interval 111–144 (VDSTTPNSSSETVELSEENKKKTQIKKEEKEDVS) is disordered. Positions 127–144 (EENKKKTQIKKEEKEDVS) are enriched in basic and acidic residues.

The protein belongs to the bacterial ribosomal protein bL31 family. Highly divergent. In terms of assembly, component of the mitochondrial large ribosomal subunit (mt-LSU). Mature yeast 74S mitochondrial ribosomes consist of a small (37S) and a large (54S) subunit. The 37S small subunit contains a 15S ribosomal RNA (15S mt-rRNA) and 34 different proteins. The 54S large subunit contains a 21S rRNA (21S mt-rRNA) and 46 different proteins.

The protein resides in the mitochondrion. Functionally, component of the mitochondrial ribosome (mitoribosome), a dedicated translation machinery responsible for the synthesis of mitochondrial genome-encoded proteins, including at least some of the essential transmembrane subunits of the mitochondrial respiratory chain. The mitoribosomes are attached to the mitochondrial inner membrane and translation products are cotranslationally integrated into the membrane. Overexpression of bL31m suppresses mutations in the COX2 leader peptide-encoding and initiation codon regions. The sequence is that of Large ribosomal subunit protein bL31m (MRPL36) from Saccharomyces cerevisiae (strain ATCC 204508 / S288c) (Baker's yeast).